A 568-amino-acid polypeptide reads, in one-letter code: AP2-like ethylene-responsive transcription factor PLT2 (568 aa).

A compositionally biased stretch (low complexity) spans 151–171 (ASPAETSADNSSSTTNTSGGA). The segment at 151–173 (ASPAETSADNSSSTTNTSGGAIV) is disordered. 2 DNA-binding regions (AP2/ERF) span residues 190 to 256 (IYRG…TNFP) and 292 to 350 (MYRG…TNFE). The interval 548 to 568 (WNSGESAQGSNPGGVFTMWNE) is disordered.

Belongs to the AP2/ERF transcription factor family. AP2 subfamily. Stabilized in root meristems by reactive oxygen species (ROS) mediated oxidative post-translational modification triggered by RGF1 hormone peptide in a RITF1-dependent manner. In terms of tissue distribution, expressed in roots, seedlings, flowers, and siliques. Also detected at low levels in leaves. In roots, specifically detected in the distal root meristem, including the QC. This tissue specificity is regulated by auxin gradient and depends on PIN proteins.

It is found in the nucleus. Functionally, probably acts as a transcriptional activator. Binds to the GCC-box pathogenesis-related promoter element. May be involved in the regulation of gene expression by stress factors and by components of stress signal transduction pathways. Master regulator of basal/root fate. Essential for root quiescent center (QC) and columella specification, stem cell activity, as well as for establishment of the stem cell niche during embryogenesis. Modulates the root polar auxin transport by regulating the distribution of PIN genes. Essential role in respecifying pattern and polarity in damaged roots. Direct target of the transcriptional corepressor TPL. Expression levels and patterns regulated post-transcriptionally by root meristem growth factors (RGFs). The protein is AP2-like ethylene-responsive transcription factor PLT2 of Arabidopsis thaliana (Mouse-ear cress).